Here is a 54-residue protein sequence, read N- to C-terminus: Large ribosomal subunit protein bL32c (54 aa).

It belongs to the bacterial ribosomal protein bL32 family.

It is found in the plastid. It localises to the chloroplast. This Lactuca sativa (Garden lettuce) protein is Large ribosomal subunit protein bL32c.